The sequence spans 200 residues: Max dimerization protein 3 (200 aa).

Disordered regions lie at residues 31 to 56 (SILP…DNVR) and 133 to 164 (RLLP…QEDL). The bHLH domain occupies 54–106 (NVRSVHNELEKHRRAQLRRCLEQLKQQVPLSMENSRHTTLSLLHRAKQHIKKL).

As to quaternary structure, efficient DNA binding requires dimerization with another bHLH protein. Binds DNA as a heterodimer with MAX. In terms of tissue distribution, expressed broadly throughout the CNS and the eye, starting at neurula stages.

It is found in the nucleus. Transcriptional repressor. Binds with MAX to form a sequence-specific DNA-binding protein complex which recognizes the core sequence 5'-CAC[GA]TG-3'. The protein is Max dimerization protein 3 (mxd3) of Xenopus laevis (African clawed frog).